Reading from the N-terminus, the 359-residue chain is Stearoyl-CoA desaturase (359 aa).

Topologically, residues 1–72 (MPAHLLQDDI…EGPSPKVEYV (72 aa)) are cytoplasmic. Residues 73–93 (WRNIILMSLLHLGALYGITLI) traverse the membrane as a helical segment. Residue Asn75 participates in substrate binding. Over 94–97 (PTCK) the chain is Lumenal. Residues 98 to 118 (FYTWLWGVFYYFVSALGITAG) traverse the membrane as a helical segment. At 119 to 217 (AHRLWSHRSY…EKLVMFQRRY (99 aa)) the chain is on the cytoplasmic side. His120 and His125 together coordinate Fe cation. The Histidine box-1 motif lies at 120–125 (HRLWSH). Asn148, Arg155, and Asp156 together coordinate substrate. Fe cation is bound by residues His157, His160, and His161. The Histidine box-2 signature appears at 157–161 (HRAHH). Substrate is bound by residues Arg188 and Lys189. Phosphoserine occurs at positions 198 and 203. The helical transmembrane segment at 218-237 (YKPGLLMMCFILPTLVPWYF) threads the bilayer. At 238–241 (WGET) the chain is on the lumenal side. Residues 242–263 (FQNSVFVATFLRYAVVLNATWL) traverse the membrane as a helical segment. Residue Trp262 participates in substrate binding. Residues 264 to 359 (VNSAAHLFGY…RTGDGNYKSG (96 aa)) are Cytoplasmic-facing. Fe cation-binding residues include His269, His298, His301, and His302. Positions 298–302 (HNYHH) match the Histidine box-3 motif.

Belongs to the fatty acid desaturase type 1 family. May self-associate and form homodimers. Fe(2+) serves as cofactor. In terms of tissue distribution, detected in fetal liver, lung and brain. Highly expressed in adult adipose tissue, and at lower levels in adult brain and lung.

Its subcellular location is the endoplasmic reticulum membrane. It catalyses the reaction octadecanoyl-CoA + 2 Fe(II)-[cytochrome b5] + O2 + 2 H(+) = (9Z)-octadecenoyl-CoA + 2 Fe(III)-[cytochrome b5] + 2 H2O. The catalysed reaction is hexadecanoyl-CoA + 2 Fe(II)-[cytochrome b5] + O2 + 2 H(+) = (9Z)-hexadecenoyl-CoA + 2 Fe(III)-[cytochrome b5] + 2 H2O. Stearoyl-CoA desaturase that utilizes O(2) and electrons from reduced cytochrome b5 to introduce the first double bond into saturated fatty acyl-CoA substrates. Catalyzes the insertion of a cis double bond at the delta-9 position into fatty acyl-CoA substrates including palmitoyl-CoA and stearoyl-CoA. Gives rise to a mixture of 16:1 and 18:1 unsaturated fatty acids. Plays an important role in lipid biosynthesis. Plays an important role in regulating the expression of genes that are involved in lipogenesis and in regulating mitochondrial fatty acid oxidation. Plays an important role in body energy homeostasis. Contributes to the biosynthesis of membrane phospholipids, cholesterol esters and triglycerides. The protein is Stearoyl-CoA desaturase (SCD) of Homo sapiens (Human).